We begin with the raw amino-acid sequence, 379 residues long: Chaperone protein DnaJ (379 aa).

The J domain maps to 5–70; it reads DYYEVLGVSR…QKRAAYDQYG (66 aa). A CR-type zinc finger spans residues 134 to 212; it reads GVTKEIRIPT…CHGHGRVEKS (79 aa). Residues cysteine 147, cysteine 150, cysteine 164, cysteine 167, cysteine 186, cysteine 189, cysteine 200, and cysteine 203 each contribute to the Zn(2+) site. 4 CXXCXGXG motif repeats span residues 147–154, 164–171, 186–193, and 200–207; these read CDVCHGSG, CPTCHGAG, CPHCHGRG, and CNKCHGHG.

The protein belongs to the DnaJ family. In terms of assembly, homodimer. Zn(2+) is required as a cofactor.

Its subcellular location is the cytoplasm. In terms of biological role, participates actively in the response to hyperosmotic and heat shock by preventing the aggregation of stress-denatured proteins and by disaggregating proteins, also in an autonomous, DnaK-independent fashion. Unfolded proteins bind initially to DnaJ; upon interaction with the DnaJ-bound protein, DnaK hydrolyzes its bound ATP, resulting in the formation of a stable complex. GrpE releases ADP from DnaK; ATP binding to DnaK triggers the release of the substrate protein, thus completing the reaction cycle. Several rounds of ATP-dependent interactions between DnaJ, DnaK and GrpE are required for fully efficient folding. Also involved, together with DnaK and GrpE, in the DNA replication of plasmids through activation of initiation proteins. The polypeptide is Chaperone protein DnaJ (Yersinia pseudotuberculosis serotype O:1b (strain IP 31758)).